Consider the following 659-residue polypeptide: Cysteine-rich receptor-like protein kinase 5 (659 aa).

Positions 1 to 24 are cleaved as a signal peptide; the sequence is MSAYTSLNFLFLLTFFIGSLRVSA. Topologically, residues 25-279 are extracellular; the sequence is QLQDPTYVGH…FPPGKGKNST (255 aa). Gnk2-homologous domains follow at residues 28 to 132 and 138 to 243; these read DPTY…DRNI and TTTT…VYPF. N-linked (GlcNAc...) asparagine glycosylation is found at Asn175 and Asn277. The chain crosses the membrane as a helical span at residues 280-300; sequence VIIIAIVVPVAISVLICVAVF. At 301 to 659 the chain is on the cytoplasmic side; that stretch reads SFHASKRAKK…AASITILAPR (359 aa). Residues 340–619 form the Protein kinase domain; sequence FSMCNKLGQG…QMLTTSSIAL (280 aa). Residues 346–354 and Lys368 contribute to the ATP site; that span reads LGQGGFGQV. Tyr413 is modified (phosphotyrosine). Asp465 functions as the Proton acceptor in the catalytic mechanism. Thr505 carries the phosphothreonine modification. Tyr513 carries the post-translational modification Phosphotyrosine.

The protein belongs to the protein kinase superfamily. Ser/Thr protein kinase family. CRK subfamily. In terms of assembly, interacts with CRKIP1 (KAPP), CRKIP2 and CRKIP3, three kinase-associated type 2C proteins.

It is found in the membrane. The catalysed reaction is L-seryl-[protein] + ATP = O-phospho-L-seryl-[protein] + ADP + H(+). It carries out the reaction L-threonyl-[protein] + ATP = O-phospho-L-threonyl-[protein] + ADP + H(+). Involved in multiple distinct defense responses. May function as a disease resistance (R) protein. The polypeptide is Cysteine-rich receptor-like protein kinase 5 (CRK5) (Arabidopsis thaliana (Mouse-ear cress)).